Here is a 305-residue protein sequence, read N- to C-terminus: Acetyl-coenzyme A carboxylase carboxyl transferase subunit beta (305 aa).

Positions 25 to 294 constitute a CoA carboxyltransferase N-terminal domain; the sequence is VWTKCDSCGQ…PGNDDVEIRS (270 aa). Positions 29, 32, 48, and 51 each coordinate Zn(2+). The segment at 29–51 adopts a C4-type zinc-finger fold; sequence CDSCGQVLYRAELERNLGVCPKC. The disordered stretch occupies residues 281–305; the sequence is NHPEPGNDDVEIRSDAPSESSQDDA.

The protein belongs to the AccD/PCCB family. Acetyl-CoA carboxylase is a heterohexamer composed of biotin carboxyl carrier protein (AccB), biotin carboxylase (AccC) and two subunits each of ACCase subunit alpha (AccA) and ACCase subunit beta (AccD). Requires Zn(2+) as cofactor.

Its subcellular location is the cytoplasm. It catalyses the reaction N(6)-carboxybiotinyl-L-lysyl-[protein] + acetyl-CoA = N(6)-biotinyl-L-lysyl-[protein] + malonyl-CoA. The protein operates within lipid metabolism; malonyl-CoA biosynthesis; malonyl-CoA from acetyl-CoA: step 1/1. Functionally, component of the acetyl coenzyme A carboxylase (ACC) complex. Biotin carboxylase (BC) catalyzes the carboxylation of biotin on its carrier protein (BCCP) and then the CO(2) group is transferred by the transcarboxylase to acetyl-CoA to form malonyl-CoA. This is Acetyl-coenzyme A carboxylase carboxyl transferase subunit beta from Pectobacterium atrosepticum (strain SCRI 1043 / ATCC BAA-672) (Erwinia carotovora subsp. atroseptica).